Reading from the N-terminus, the 183-residue chain is Ferritin heavy chain (183 aa).

At methionine 1 the chain carries N-acetylmethionine. Threonine 2 carries the post-translational modification N-acetylthreonine; in Ferritin heavy chain, N-terminally processed. One can recognise a Ferritin-like diiron domain in the interval 11–160; sequence QNYHQDSEAA…DHVTNLRKMG (150 aa). Residues glutamate 28, glutamate 63, histidine 66, glutamate 108, and glutamine 142 each contribute to the Fe cation site. Serine 179 and serine 183 each carry phosphoserine.

Belongs to the ferritin family. In terms of assembly, oligomer of 24 subunits. There are two types of subunits: L (light) chain and H (heavy) chain. The major chain can be light or heavy, depending on the species and tissue type. The functional molecule forms a roughly spherical shell with a diameter of 12 nm and contains a central cavity into which the insoluble mineral iron core is deposited. Interacts with NCOA4; NCOA4 promotes targeting of the iron-binding ferritin complex to autolysosomes following starvation or iron depletion. Ubiquitous.

It is found in the cytoplasm. The protein localises to the lysosome. It localises to the cytoplasmic vesicle. Its subcellular location is the autophagosome. It carries out the reaction 4 Fe(2+) + O2 + 4 H(+) = 4 Fe(3+) + 2 H2O. Its function is as follows. Stores iron in a soluble, non-toxic, readily available form. Important for iron homeostasis. Has ferroxidase activity. Iron is taken up in the ferrous form and deposited as ferric hydroxides after oxidation. Also plays a role in delivery of iron to cells. Mediates iron uptake in capsule cells of the developing kidney. Delivery to lysosomes is mediated by the cargo receptor NCOA4 for autophagic degradation and release of iron. In Trichosurus vulpecula (Brush-tailed possum), this protein is Ferritin heavy chain (FTH1).